The primary structure comprises 243 residues: 2,3-bisphosphoglycerate-dependent phosphoglycerate mutase (243 aa).

Residues 8-15 (RHGQSEWN), 21-22 (TG), Arg-60, 87-90 (ERHY), Lys-98, 114-115 (RR), and 183-184 (GN) contribute to the substrate site. His-9 (tele-phosphohistidine intermediate) is an active-site residue. The Proton donor/acceptor role is filled by Glu-87.

It belongs to the phosphoglycerate mutase family. BPG-dependent PGAM subfamily. Homodimer.

The catalysed reaction is (2R)-2-phosphoglycerate = (2R)-3-phosphoglycerate. The protein operates within carbohydrate degradation; glycolysis; pyruvate from D-glyceraldehyde 3-phosphate: step 3/5. Catalyzes the interconversion of 2-phosphoglycerate and 3-phosphoglycerate. This is 2,3-bisphosphoglycerate-dependent phosphoglycerate mutase from Maricaulis maris (strain MCS10) (Caulobacter maris).